We begin with the raw amino-acid sequence, 95 residues long: Integration host factor subunit beta (95 aa).

The interval 56–76 (RAPRTGRNPKTGTSVELDGKY) is disordered.

It belongs to the bacterial histone-like protein family. In terms of assembly, heterodimer of an alpha and a beta chain.

This protein is one of the two subunits of integration host factor, a specific DNA-binding protein that functions in genetic recombination as well as in transcriptional and translational control. The chain is Integration host factor subunit beta from Shewanella woodyi (strain ATCC 51908 / MS32).